The chain runs to 514 residues: MTTTKRPIALLILDGWGYRENTHMNAIYHANTPVLDRLNAQYAHGLISGSGLDVGLPDGQMGNSEVGHINLGSGRIVYQELTRISKAIADHEFEQNPALCDAVDVAVKAGGAVHIMGLLSPGGVHSHEEHIEAMCRMAVARGATKVYLHAFLDGRDTPPRSAKGSLSHFDDLFTTLGHGRIASIIGRYFAMDRDNRWDRVSQAYDLITQGKAKFQYDNAVTALEAAYERNENDEFVSSSAITDSEGKVASLNDGDALIFMNFRADRARQITRSFINADFDGFERAVTPKVNFVTLTEYAADIKAPIAYPSENLVNTLGEVLQNRGRTQLRISETEKYAHVTFFFNGGKEEPFNGEDRILINSPKVATYDLQPEMSSTELTDKLVAAIESAQYDVIICNYPNGDMVGHTGNFDAAVKACEAVDACIGRVVDALAKVGGECIITADHGNAEQMTDETTGQAHTAHTSELVPFVFVGRDATIDEGGKLSDVAPTILHLMGETIPAEMTGKPLIHVKE.

Mn(2+) is bound by residues Asp14 and Ser64. Ser64 serves as the catalytic Phosphoserine intermediate. Residues His125, 155-156 (RD), Arg187, Arg193, 263-266 (RADR), and Lys336 each bind substrate. 5 residues coordinate Mn(2+): Asp403, His407, Asp444, His445, and His463.

This sequence belongs to the BPG-independent phosphoglycerate mutase family. In terms of assembly, monomer. Mn(2+) is required as a cofactor.

It carries out the reaction (2R)-2-phosphoglycerate = (2R)-3-phosphoglycerate. The protein operates within carbohydrate degradation; glycolysis; pyruvate from D-glyceraldehyde 3-phosphate: step 3/5. Catalyzes the interconversion of 2-phosphoglycerate and 3-phosphoglycerate. This chain is 2,3-bisphosphoglycerate-independent phosphoglycerate mutase, found in Shewanella sp. (strain MR-4).